The chain runs to 355 residues: Protein pelota homolog (355 aa).

This sequence belongs to the eukaryotic release factor 1 family. Pelota subfamily. In terms of assembly, monomer. A divalent metal cation is required as a cofactor.

It localises to the cytoplasm. Functionally, may function in recognizing stalled ribosomes, interact with stem-loop structures in stalled mRNA molecules, and effect endonucleolytic cleavage of the mRNA. May play a role in the release non-functional ribosomes and degradation of damaged mRNAs. Has endoribonuclease activity. This chain is Protein pelota homolog, found in Natronomonas pharaonis (strain ATCC 35678 / DSM 2160 / CIP 103997 / JCM 8858 / NBRC 14720 / NCIMB 2260 / Gabara) (Halobacterium pharaonis).